The chain runs to 148 residues: MKVILKQDVKGLGKKEQMVEASDGYARNFLLPKGLAVEATSANVNIMKTKKEAEAQKKEREVAQAKELAKKIKDITVTLKVKAGENGKLFGSITSKDVAEALKTQQKLDIDKKKLVMPDSVKSIGTFDVEVKLYPEINSKFTVKIENL.

It belongs to the bacterial ribosomal protein bL9 family.

Functionally, binds to the 23S rRNA. The sequence is that of Large ribosomal subunit protein bL9 from Ruminiclostridium cellulolyticum (strain ATCC 35319 / DSM 5812 / JCM 6584 / H10) (Clostridium cellulolyticum).